The sequence spans 472 residues: 4-aminobutyrate aminotransferase (472 aa).

135–136 (GA) provides a ligand contact to pyridoxal 5'-phosphate. Substrate is bound at residue Arg193. Position 327 is an N6-(pyridoxal phosphate)lysine (Lys327). Thr352 is a binding site for pyridoxal 5'-phosphate.

Belongs to the class-III pyridoxal-phosphate-dependent aminotransferase family. In terms of assembly, homodimer and homotetramer. Pyridoxal 5'-phosphate serves as cofactor.

It is found in the cytoplasm. It carries out the reaction 4-aminobutanoate + 2-oxoglutarate = succinate semialdehyde + L-glutamate. It functions in the pathway amino-acid degradation; L-arginine degradation. In terms of biological role, required for the degradation of gamma-aminobutyric acid (GABA), which is important for utilization of GABA as nitrogen source and for oxidative stress tolerance. Deaminates GABA to succinate semialdehyde, which in turn is converted to succinate by the succinate-semialdehyde dehydrogenase UGA2. May be involved in an alternative, arginase-independent arginine degradation pathway via GABA. The chain is 4-aminobutyrate aminotransferase from Kluyveromyces lactis (strain ATCC 8585 / CBS 2359 / DSM 70799 / NBRC 1267 / NRRL Y-1140 / WM37) (Yeast).